The primary structure comprises 355 residues: F-box only protein 32 (355 aa).

The Nuclear localization signal signature appears at 62–67 (KKRKKD). Residues 169 to 173 (LLQTL) carry the Nuclear export signal motif. An F-box domain is found at 223 to 271 (LTFTDLPLCLQLNIMQRLSDGRDLVSLGQAAPDLHVLSEDRLLWKKLCQ). A Bipartite nuclear localization signal motif is present at residues 280–295 (RKRLILSDKGQLDWKK).

In terms of assembly, part of the SCF (SKP1-CUL1-F-box) E3 ubiquitin-protein ligase complex SCF(FBXO32) formed of CUL1, SKP1, RBX1 and FBXO32. As to expression, specifically expressed in cardiac and skeletal muscle.

The protein localises to the cytoplasm. The protein resides in the nucleus. It participates in protein modification; protein ubiquitination. Its function is as follows. Substrate recognition component of a SCF (SKP1-CUL1-F-box protein) E3 ubiquitin-protein ligase complex which mediates the ubiquitination and subsequent proteasomal degradation of target proteins. Probably recognizes and binds to phosphorylated target proteins during skeletal muscle atrophy. Recognizes TERF1. This is F-box only protein 32 (FBXO32) from Homo sapiens (Human).